A 1064-amino-acid polypeptide reads, in one-letter code: Leucine--tRNA ligase (1064 aa).

The segment at 1-25 (MARAMSETAEPGARTGAADTTVAPT) is disordered. The 'HIGH' region motif lies at 106–117 (PYPSGSGLHVGH). Residues 435-456 (GRPGGGTEPADTAGPEAGADPA) are disordered. Residues 831 to 835 (KMGKS) carry the 'KMSKS' region motif. Lysine 834 is an ATP binding site.

It belongs to the class-I aminoacyl-tRNA synthetase family.

The protein localises to the cytoplasm. The catalysed reaction is tRNA(Leu) + L-leucine + ATP = L-leucyl-tRNA(Leu) + AMP + diphosphate. This is Leucine--tRNA ligase from Frankia casuarinae (strain DSM 45818 / CECT 9043 / HFP020203 / CcI3).